The sequence spans 211 residues: MKARKYNKEGVFVSEVELPAELFATGISLGAIYDAVKAENANNRQGTHSTKDRSEVRGGGIKPWAQKGTGRARQGSIRAPHFVGGGIIHGPKPRDYSSNLSRSVKKKAVLSILNKKAEENRIAIIEDVEPSSYSTKSIYNILKNMDIAEKGNVGFVVAGENQFLKKSTRNIENLKYVNSKRVVCRDILYNNNLVISESALKELQAQYSKKG.

The interval 42–73 (NNRQGTHSTKDRSEVRGGGIKPWAQKGTGRAR) is disordered.

Belongs to the universal ribosomal protein uL4 family. In terms of assembly, part of the 50S ribosomal subunit.

One of the primary rRNA binding proteins, this protein initially binds near the 5'-end of the 23S rRNA. It is important during the early stages of 50S assembly. It makes multiple contacts with different domains of the 23S rRNA in the assembled 50S subunit and ribosome. In terms of biological role, forms part of the polypeptide exit tunnel. This chain is Large ribosomal subunit protein uL4, found in Leptospira biflexa serovar Patoc (strain Patoc 1 / Ames).